The primary structure comprises 513 residues: Interferon alpha/beta receptor 2 (513 aa).

The first 21 residues, 1–21 (MRSRCTVSAVGLLSLCLVVSA), serve as a signal peptide directing secretion. Residues 22–242 (SLETITPSAF…GQESGLSESA (221 aa)) are Extracellular-facing. 2 disulfides stabilise this stretch: Cys-39/Cys-123 and Cys-85/Cys-93. N-linked (GlcNAc...) asparagine glycans are attached at residues Asn-42, Asn-58, Asn-65, Asn-78, and Asn-84. 3 N-linked (GlcNAc...) asparagine glycosylation sites follow: Asn-149, Asn-191, and Asn-195. The cysteines at positions 210 and 227 are disulfide-linked. The chain crosses the membrane as a helical span at residues 243–263 (IVGITTSCLVVMVFVSTIVML). Residues 264 to 513 (KRIGYICLKD…ADVGDGYIMR (250 aa)) are Cytoplasmic-facing. Residues 334 to 402 (GYTMHGLTGK…DPTGPYERRK (69 aa)) are disordered. At Tyr-335 the chain carries Phosphotyrosine. The segment covering 344–354 (PLQQTSDTSAS) has biased composition (polar residues). The span at 377 to 389 (GAEPELPTEAGAG) shows a compositional bias: low complexity. Phosphoserine is present on Ser-403. The segment at 421 to 444 (GDNIIFNVNLNSVFLRVLHDEDAS) is mediates interaction with STAT2 (and required for the recruitment of USP18). Residues Ser-448 and Ser-465 each carry the phosphoserine modification. The tract at residues 458–513 (EGPQRTESDLRIAGGDRTQPPLPSLPSQDLWTEDGSSEKSDTSDSDADVGDGYIMR) is disordered. Residue Tyr-510 is modified to Phosphotyrosine.

Belongs to the type II cytokine receptor family. As to quaternary structure, heterodimer with IFNAR1; forming the receptor for type I interferon. Interacts with the transcriptional factors STAT1 and STAT2. Interacts with JAK1. Interacts with USP18; indirectly via STAT2, it negatively regulates the assembly of the ternary interferon-IFNAR1-IFNAR2 complex and therefore type I interferon signaling. Post-translationally, phosphorylated on tyrosine residues upon interferon binding. Phosphorylation at Tyr-335 or Tyr-510 are sufficient to mediate interferon dependent activation of STAT1, STAT2 and STAT3 leading to antiproliferative effects on many different cell types. In terms of tissue distribution, widely expressed. Detected in liver, testis, kidney, salivary gland, thymus, brain, lung and placenta. Isoform 1, isoform 2 and isoform 3 are expressed in brain.

The protein resides in the cell membrane. Its subcellular location is the secreted. Its function is as follows. Together with IFNAR1, forms the heterodimeric receptor for type I interferons (including interferons alpha, beta, epsilon, omega and kappa). Type I interferon binding activates the JAK-STAT signaling cascade, resulting in transcriptional activation or repression of interferon-regulated genes that encode the effectors of the interferon response. Mechanistically, type I interferon-binding brings the IFNAR1 and IFNAR2 subunits into close proximity with one another, driving their associated Janus kinases (JAKs) (TYK2 bound to IFNAR1 and JAK1 bound to IFNAR2) to cross-phosphorylate one another. The activated kinases phosphorylate specific tyrosine residues on the intracellular domains of IFNAR1 and IFNAR2, forming docking sites for the STAT transcription factors (STAT1, STAT2 and STAT). STAT proteins are then phosphorylated by the JAKs, promoting their translocation into the nucleus to regulate expression of interferon-regulated genes. In terms of biological role, may be potent inhibitors of type I IFN receptor activity. This chain is Interferon alpha/beta receptor 2 (Ifnar2), found in Mus musculus (Mouse).